The sequence spans 204 residues: MDFLFNTNAQFFIAAYLIGAIPFGLLLAKKYAGVDVKSSGSGSIGATNVLRVVKQSNPALAKKLGAATLLLDALKGVLVLLFAYFYGVSEATLWGISVLAVLGHCYSPYLGFEGGKGVATGMGVMMFMLPLETIIALVVWALGAKFIRISSLSSLTALGALIVASFILHPDMAHAPVIIIGFVLLYKHIPNIIRLFKGEEKRVV.

4 helical membrane passes run 8–28 (NAQF…LLLA), 76–96 (GVLV…LWGI), 122–142 (MGVM…VWAL), and 166–186 (FILH…VLLY).

Belongs to the PlsY family. Probably interacts with PlsX.

The protein localises to the cell inner membrane. The enzyme catalyses an acyl phosphate + sn-glycerol 3-phosphate = a 1-acyl-sn-glycero-3-phosphate + phosphate. It participates in lipid metabolism; phospholipid metabolism. In terms of biological role, catalyzes the transfer of an acyl group from acyl-phosphate (acyl-PO(4)) to glycerol-3-phosphate (G3P) to form lysophosphatidic acid (LPA). This enzyme utilizes acyl-phosphate as fatty acyl donor, but not acyl-CoA or acyl-ACP. The protein is Glycerol-3-phosphate acyltransferase of Sulfurimonas denitrificans (strain ATCC 33889 / DSM 1251) (Thiomicrospira denitrificans (strain ATCC 33889 / DSM 1251)).